Reading from the N-terminus, the 242-residue chain is Type III pantothenate kinase (242 aa).

Residue 7–14 (DLGNSRFK) coordinates ATP. Substrate-binding positions include Tyr-91 and 98-101 (GVDR). Asp-100 (proton acceptor) is an active-site residue. Thr-121 is an ATP binding site. Thr-171 contacts substrate.

This sequence belongs to the type III pantothenate kinase family. Homodimer. It depends on NH4(+) as a cofactor. Requires K(+) as cofactor.

The protein resides in the cytoplasm. The catalysed reaction is (R)-pantothenate + ATP = (R)-4'-phosphopantothenate + ADP + H(+). It functions in the pathway cofactor biosynthesis; coenzyme A biosynthesis; CoA from (R)-pantothenate: step 1/5. Catalyzes the phosphorylation of pantothenate (Pan), the first step in CoA biosynthesis. This Xylella fastidiosa (strain 9a5c) protein is Type III pantothenate kinase.